The primary structure comprises 413 residues: Arginine biosynthesis bifunctional protein ArgJ (413 aa).

Positions 158, 184, 195, 285, 408, and 413 each coordinate substrate. The Nucleophile role is filled by T195.

This sequence belongs to the ArgJ family. As to quaternary structure, heterotetramer of two alpha and two beta chains.

It localises to the cytoplasm. It catalyses the reaction N(2)-acetyl-L-ornithine + L-glutamate = N-acetyl-L-glutamate + L-ornithine. The catalysed reaction is L-glutamate + acetyl-CoA = N-acetyl-L-glutamate + CoA + H(+). Its pathway is amino-acid biosynthesis; L-arginine biosynthesis; L-ornithine and N-acetyl-L-glutamate from L-glutamate and N(2)-acetyl-L-ornithine (cyclic): step 1/1. It participates in amino-acid biosynthesis; L-arginine biosynthesis; N(2)-acetyl-L-ornithine from L-glutamate: step 1/4. Functionally, catalyzes two activities which are involved in the cyclic version of arginine biosynthesis: the synthesis of N-acetylglutamate from glutamate and acetyl-CoA as the acetyl donor, and of ornithine by transacetylation between N(2)-acetylornithine and glutamate. This chain is Arginine biosynthesis bifunctional protein ArgJ, found in Agrobacterium fabrum (strain C58 / ATCC 33970) (Agrobacterium tumefaciens (strain C58)).